The sequence spans 311 residues: Histidine decarboxylase proenzyme (311 aa).

2 residues coordinate substrate: D64 and S82. Position 83 is a pyruvic acid (Ser) (S83). The active-site Proton donor is the E198.

As to quaternary structure, the proenzyme is a hexamer of identical pi chains; each pi chain monomer is cleaved to form a small (or beta) chain and a large (or alpha) chain by non-hydrolytic self-catalysis. Pyruvate is required as a cofactor.

It catalyses the reaction L-histidine + H(+) = histamine + CO2. In Lactobacillus sp. (strain 30a), this protein is Histidine decarboxylase proenzyme (hdcA).